A 238-amino-acid polypeptide reads, in one-letter code: Probable transcriptional regulatory protein CT_457 (238 aa).

The disordered stretch occupies residues 1 to 21; the sequence is MAGHSKWANTKHRKERADHKK. Residues 9–21 show a composition bias toward basic residues; sequence NTKHRKERADHKK.

This sequence belongs to the TACO1 family.

The protein resides in the cytoplasm. This chain is Probable transcriptional regulatory protein CT_457, found in Chlamydia trachomatis serovar D (strain ATCC VR-885 / DSM 19411 / UW-3/Cx).